A 225-amino-acid chain; its full sequence is NAD(P)H-hydrate epimerase (225 aa).

A YjeF N-terminal domain is found at 9-209 (MQTIDNYTVE…DIGLLTPQDF (201 aa)). A (6S)-NADPHX-binding site is contributed by 57–61 (NNGAD). 2 residues coordinate K(+): asparagine 58 and aspartate 119. Residues 123 to 129 (GTGLNNL) and aspartate 152 each bind (6S)-NADPHX. Threonine 155 is a K(+) binding site.

Belongs to the NnrE/AIBP family. Requires K(+) as cofactor.

The catalysed reaction is (6R)-NADHX = (6S)-NADHX. The enzyme catalyses (6R)-NADPHX = (6S)-NADPHX. Functionally, catalyzes the epimerization of the S- and R-forms of NAD(P)HX, a damaged form of NAD(P)H that is a result of enzymatic or heat-dependent hydration. This is a prerequisite for the S-specific NAD(P)H-hydrate dehydratase to allow the repair of both epimers of NAD(P)HX. The sequence is that of NAD(P)H-hydrate epimerase from Leuconostoc kimchii (strain IMSNU 11154 / KCTC 2386 / IH25).